We begin with the raw amino-acid sequence, 194 residues long: MKTFELEGKGREIVARSADQKRALKAMRKNNEIPAVLYGGEKVTHFTVTKEAVRKLVYTPEIFVVELSIDGNKTMAIVKDMQFQPVTDEILHMDFLEVSKDKAVVMEVPVVLEGHAEGVKAGGKLSLQMRKLKVKAIYDQIPEKLTINVDHLGLGKTMQVGALHFEGLELMNAKNAVVCAVQLTRAARGAQAKG.

The protein belongs to the bacterial ribosomal protein bL25 family. CTC subfamily. In terms of assembly, part of the 50S ribosomal subunit; part of the 5S rRNA/L5/L18/L25 subcomplex. Contacts the 5S rRNA. Binds to the 5S rRNA independently of L5 and L18.

Its function is as follows. This is one of the proteins that binds to the 5S RNA in the ribosome where it forms part of the central protuberance. The sequence is that of Large ribosomal subunit protein bL25 from Parabacteroides distasonis (strain ATCC 8503 / DSM 20701 / CIP 104284 / JCM 5825 / NCTC 11152).